The primary structure comprises 118 residues: Large ribosomal subunit protein uL24 (118 aa).

The protein belongs to the universal ribosomal protein uL24 family. In terms of assembly, part of the 50S ribosomal subunit.

Functionally, one of two assembly initiator proteins, it binds directly to the 5'-end of the 23S rRNA, where it nucleates assembly of the 50S subunit. In terms of biological role, one of the proteins that surrounds the polypeptide exit tunnel on the outside of the subunit. The polypeptide is Large ribosomal subunit protein uL24 (Prochlorococcus marinus subsp. pastoris (strain CCMP1986 / NIES-2087 / MED4)).